Here is a 210-residue protein sequence, read N- to C-terminus: Proteasome subunit beta 2 (210 aa).

Positions 1 to 12 (MSNNVEEKILHG) are cleaved as a propeptide — removed in mature form; by autocatalysis. The active-site Nucleophile is the Thr-13.

Belongs to the peptidase T1B family. In terms of assembly, the 20S proteasome core is composed of 14 alpha and 14 beta subunits that assemble into four stacked heptameric rings, resulting in a barrel-shaped structure. The two inner rings, each composed of seven catalytic beta subunits, are sandwiched by two outer rings, each composed of seven alpha subunits. The catalytic chamber with the active sites is on the inside of the barrel. Has a gated structure, the ends of the cylinder being occluded by the N-termini of the alpha-subunits. Is capped at one or both ends by the proteasome regulatory ATPase, PAN.

The protein localises to the cytoplasm. The catalysed reaction is Cleavage of peptide bonds with very broad specificity.. Its activity is regulated as follows. The formation of the proteasomal ATPase PAN-20S proteasome complex, via the docking of the C-termini of PAN into the intersubunit pockets in the alpha-rings, triggers opening of the gate for substrate entry. Interconversion between the open-gate and close-gate conformations leads to a dynamic regulation of the 20S proteasome proteolysis activity. Functionally, component of the proteasome core, a large protease complex with broad specificity involved in protein degradation. The sequence is that of Proteasome subunit beta 2 from Nitrosopumilus maritimus (strain SCM1).